Here is a 905-residue protein sequence, read N- to C-terminus: DNA gyrase subunit A (905 aa).

Residues Ile35–Leu524 form the Topo IIA-type catalytic domain. Catalysis depends on Tyr123, which acts as the O-(5'-phospho-DNA)-tyrosine intermediate. The GyrA-box signature appears at Gln551–Gly557. The segment at Thr885–Val905 is disordered. Over residues Ala886–Val905 the composition is skewed to acidic residues.

It belongs to the type II topoisomerase GyrA/ParC subunit family. Heterotetramer, composed of two GyrA and two GyrB chains. In the heterotetramer, GyrA contains the active site tyrosine that forms a transient covalent intermediate with DNA, while GyrB binds cofactors and catalyzes ATP hydrolysis.

Its subcellular location is the cytoplasm. The catalysed reaction is ATP-dependent breakage, passage and rejoining of double-stranded DNA.. Functionally, a type II topoisomerase that negatively supercoils closed circular double-stranded (ds) DNA in an ATP-dependent manner to modulate DNA topology and maintain chromosomes in an underwound state. Negative supercoiling favors strand separation, and DNA replication, transcription, recombination and repair, all of which involve strand separation. Also able to catalyze the interconversion of other topological isomers of dsDNA rings, including catenanes and knotted rings. Type II topoisomerases break and join 2 DNA strands simultaneously in an ATP-dependent manner. The polypeptide is DNA gyrase subunit A (Rickettsia conorii (strain ATCC VR-613 / Malish 7)).